The primary structure comprises 174 residues: Ribosomal RNA large subunit methyltransferase H (174 aa).

S-adenosyl-L-methionine contacts are provided by residues Leu-90, Gly-122, and Leu-141 to Trp-146.

Belongs to the RNA methyltransferase RlmH family. In terms of assembly, homodimer.

Its subcellular location is the cytoplasm. The catalysed reaction is pseudouridine(1915) in 23S rRNA + S-adenosyl-L-methionine = N(3)-methylpseudouridine(1915) in 23S rRNA + S-adenosyl-L-homocysteine + H(+). In terms of biological role, specifically methylates the pseudouridine at position 1915 (m3Psi1915) in 23S rRNA. In Brucella melitensis biotype 2 (strain ATCC 23457), this protein is Ribosomal RNA large subunit methyltransferase H.